A 418-amino-acid chain; its full sequence is Actin-related protein 3 (418 aa).

This sequence belongs to the actin family. ARP3 subfamily. In terms of assembly, component of the Arp2/3 complex.

The protein localises to the cytoplasm. The protein resides in the cytoskeleton. Functions as ATP-binding component of the Arp2/3 complex which is involved in regulation of actin polymerization and together with an activating nucleation-promoting factor (NPF) mediates the formation of branched actin networks. Seems to contact the pointed end of the daughter actin filament. Required during embryogenesis for the developmental migration of tail hemocytes anteriorly, along the ventral midline. The protein is Actin-related protein 3 of Drosophila melanogaster (Fruit fly).